A 217-amino-acid polypeptide reads, in one-letter code: Chorionic somatomammotropin hormone 1 (217 aa).

The N-terminal stretch at 1 to 26 is a signal peptide; sequence MAPGSRTSLLLAFALLCLPWLQEAGA. H44 contacts Zn(2+). A disulfide bridge links C79 with C191. E200 contributes to the Zn(2+) binding site. Residues C208 and C215 are joined by a disulfide bond.

Belongs to the somatotropin/prolactin family. As to quaternary structure, can be found in a monomeric as well as dimeric form.

It localises to the secreted. Functionally, produced only during pregnancy and is involved in stimulating lactation, fetal growth and metabolism. Does not interact with GHR but only activates PRLR through zinc-induced dimerization. The protein is Chorionic somatomammotropin hormone 1 (CSH1) of Homo sapiens (Human).